A 189-amino-acid polypeptide reads, in one-letter code: MRVVLVGPPGAGKGTQAQILASKLSIPKVSTGDIFRANVSGGTELGKKAQAYMDRGDLVPDEITNAMVRDRLAEDDARAGFLLDGFPRNLAQAETLDEMLADLGVKLDVVLELVVDEEEVIRRLAERARIDNRSDDNEETIRHRLVVYREQTAPLVSFYEKRGLLEKIDAVGPIEEVTQRAMTALKSRA.

Residue 10–15 coordinates ATP; sequence GAGKGT. Positions 30 to 59 are NMP; the sequence is STGDIFRANVSGGTELGKKAQAYMDRGDLV. AMP-binding positions include Thr-31, Arg-36, 57–59, 85–88, and Gln-92; these read DLV and GFPR. Residues 126-136 are LID; the sequence is ERARIDNRSDD. An ATP-binding site is contributed by Arg-127. The AMP site is built by Arg-133 and Arg-144. Gly-172 contributes to the ATP binding site.

The protein belongs to the adenylate kinase family. In terms of assembly, monomer.

It is found in the cytoplasm. It carries out the reaction AMP + ATP = 2 ADP. The protein operates within purine metabolism; AMP biosynthesis via salvage pathway; AMP from ADP: step 1/1. Functionally, catalyzes the reversible transfer of the terminal phosphate group between ATP and AMP. Plays an important role in cellular energy homeostasis and in adenine nucleotide metabolism. The polypeptide is Adenylate kinase (Thermobifida fusca (strain YX)).